The following is a 537-amino-acid chain: MELSLLRPTTQSLLPSFSKPNLRLNVYKPLRLRCSVAGGPTVGSSKIEGGGGTTITTDCVIVGGGISGLCIAQALATKHPDAAPNLIVTEAKDRVGGNIITREENGFLWEEGPNSFQPSDPMLTMVVDSGLKDDLVLGDPTAPRFVLWNGKLRPVPSKLTDLPFFDLMSIGGKIRAGFGALGIRPSPPGREESVEEFVRRNLGDEVFERLIEPFCSGVYAGDPSKLSMKAAFGKVWKLEQNGGSIIGGTFKAIQERKNAPKAERDPRLPKPQGQTVGSFRKGLRMLPEAISARLGSKVKLSWKLSGITKLESGGYNLTYETPDGLVSVQSKSVVMTVPSHVASGLLRPLSESAANALSKLYYPPVAAVSISYPKEAIRTECLIDGELKGFGQLHPRTQGVETLGTIYSSSLFPNRAPPGRILLLNYIGGSTNTGILSKSEGELVEAVDRDLRKMLIKPNSTDPLKLGVRVWPQAIPQFLVGHFDILDTAKSSLTSSGYEGLFLGGNYVAGVALGRCVEGAYETAIEVNNFMSRYAYK.

The N-terminal 34 residues, M1–C34, are a transit peptide targeting the chloroplast. The residue at position 35 (S35) is an N-acetylserine. FAD-binding positions include G63–G68, E90–A91, and G112–S115. Positions R256–L268 are enriched in basic and acidic residues. The disordered stretch occupies residues R256–T275. V511–L513 serves as a coordination point for FAD.

This sequence belongs to the protoporphyrinogen/coproporphyrinogen oxidase family. Protoporphyrinogen oxidase subfamily. The cofactor is FAD. In terms of tissue distribution, expressed at high levels in the leaves and at low levels in the roots and floral buds.

The protein resides in the plastid. It localises to the chloroplast. It carries out the reaction protoporphyrinogen IX + 3 O2 = protoporphyrin IX + 3 H2O2. The protein operates within porphyrin-containing compound metabolism; protoporphyrin-IX biosynthesis; protoporphyrin-IX from protoporphyrinogen-IX: step 1/1. It functions in the pathway porphyrin-containing compound metabolism; chlorophyll biosynthesis. With respect to regulation, inhibited by acifluorfen. In terms of biological role, catalyzes the 6-electron oxidation of protoporphyrinogen-IX to form protoporphyrin-IX. The polypeptide is Protoporphyrinogen oxidase 1, chloroplastic (PPOX1) (Arabidopsis thaliana (Mouse-ear cress)).